A 218-amino-acid polypeptide reads, in one-letter code: Ribose-5-phosphate isomerase A (218 aa).

Substrate contacts are provided by residues 28-31, 81-84, and 94-97; these read TGST, DGAD, and KGGG. Glu-103 serves as the catalytic Proton acceptor. Lys-121 lines the substrate pocket.

This sequence belongs to the ribose 5-phosphate isomerase family. As to quaternary structure, homodimer.

It catalyses the reaction aldehydo-D-ribose 5-phosphate = D-ribulose 5-phosphate. Its pathway is carbohydrate degradation; pentose phosphate pathway; D-ribose 5-phosphate from D-ribulose 5-phosphate (non-oxidative stage): step 1/1. Functionally, catalyzes the reversible conversion of ribose-5-phosphate to ribulose 5-phosphate. The sequence is that of Ribose-5-phosphate isomerase A from Alcanivorax borkumensis (strain ATCC 700651 / DSM 11573 / NCIMB 13689 / SK2).